We begin with the raw amino-acid sequence, 247 residues long: Phosphatidylserine decarboxylase proenzyme (247 aa).

The active-site Schiff-base intermediate with substrate; via pyruvic acid is Ser206. Residue Ser206 is modified to Pyruvic acid (Ser); by autocatalysis.

It belongs to the phosphatidylserine decarboxylase family. PSD-A subfamily. As to quaternary structure, heterodimer of a large membrane-associated beta subunit and a small pyruvoyl-containing alpha subunit. It depends on pyruvate as a cofactor. Post-translationally, is synthesized initially as an inactive proenzyme. Formation of the active enzyme involves a self-maturation process in which the active site pyruvoyl group is generated from an internal serine residue via an autocatalytic post-translational modification. Two non-identical subunits are generated from the proenzyme in this reaction, and the pyruvate is formed at the N-terminus of the alpha chain, which is derived from the carboxyl end of the proenzyme. The post-translation cleavage follows an unusual pathway, termed non-hydrolytic serinolysis, in which the side chain hydroxyl group of the serine supplies its oxygen atom to form the C-terminus of the beta chain, while the remainder of the serine residue undergoes an oxidative deamination to produce ammonia and the pyruvoyl prosthetic group on the alpha chain.

Its subcellular location is the cell membrane. The catalysed reaction is a 1,2-diacyl-sn-glycero-3-phospho-L-serine + H(+) = a 1,2-diacyl-sn-glycero-3-phosphoethanolamine + CO2. Its pathway is phospholipid metabolism; phosphatidylethanolamine biosynthesis; phosphatidylethanolamine from CDP-diacylglycerol: step 2/2. Catalyzes the formation of phosphatidylethanolamine (PtdEtn) from phosphatidylserine (PtdSer). The polypeptide is Phosphatidylserine decarboxylase proenzyme (Nitrobacter winogradskyi (strain ATCC 25391 / DSM 10237 / CIP 104748 / NCIMB 11846 / Nb-255)).